Reading from the N-terminus, the 20-residue chain is C-reactive protein (20 aa).

Positions 1–20 (SPVAASYRATAGLAGKALDF) constitute a Pentraxin (PTX) domain.

It belongs to the pentraxin family. Homodimer; disulfide-linked. It is not known if it assembles into a pentraxin (or pentaxin) structure. Pentraxins have a discoid arrangement of 5 non-covalently bound subunits. Glycosylated.

It is found in the secreted. In terms of biological role, displays several functions associated with host defense: it promotes agglutination, bacterial capsular swelling, phagocytosis, and complement fixation through its calcium-dependent binding to phosphorylcholine. The chain is C-reactive protein from Mustelus canis (Smooth dogfish).